A 485-amino-acid polypeptide reads, in one-letter code: Bifunctional protein HldE (485 aa).

The ribokinase stretch occupies residues Met1–Asn326. Position 195–198 (Asn195–Glu198) interacts with ATP. The active site involves Asp271. The tract at residues Phe354 to Thr485 is cytidylyltransferase.

It in the N-terminal section; belongs to the carbohydrate kinase PfkB family. The protein in the C-terminal section; belongs to the cytidylyltransferase family. In terms of assembly, homodimer.

It catalyses the reaction D-glycero-beta-D-manno-heptose 7-phosphate + ATP = D-glycero-beta-D-manno-heptose 1,7-bisphosphate + ADP + H(+). The enzyme catalyses D-glycero-beta-D-manno-heptose 1-phosphate + ATP + H(+) = ADP-D-glycero-beta-D-manno-heptose + diphosphate. The protein operates within nucleotide-sugar biosynthesis; ADP-L-glycero-beta-D-manno-heptose biosynthesis; ADP-L-glycero-beta-D-manno-heptose from D-glycero-beta-D-manno-heptose 7-phosphate: step 1/4. It functions in the pathway nucleotide-sugar biosynthesis; ADP-L-glycero-beta-D-manno-heptose biosynthesis; ADP-L-glycero-beta-D-manno-heptose from D-glycero-beta-D-manno-heptose 7-phosphate: step 3/4. Catalyzes the phosphorylation of D-glycero-D-manno-heptose 7-phosphate at the C-1 position to selectively form D-glycero-beta-D-manno-heptose-1,7-bisphosphate. In terms of biological role, catalyzes the ADP transfer from ATP to D-glycero-beta-D-manno-heptose 1-phosphate, yielding ADP-D-glycero-beta-D-manno-heptose. This Granulibacter bethesdensis (strain ATCC BAA-1260 / CGDNIH1) protein is Bifunctional protein HldE.